Here is a 218-residue protein sequence, read N- to C-terminus: Large ribosomal subunit protein uL4 (218 aa).

The interval 46-100 (ARQGTHSTKTRAEVRGGGRKPFRQKGTGRARQGSIRAPHFTGGGISHGPKPRDYA) is disordered. Positions 62–73 (GGRKPFRQKGTG) are enriched in basic residues.

This sequence belongs to the universal ribosomal protein uL4 family. In terms of assembly, part of the 50S ribosomal subunit.

One of the primary rRNA binding proteins, this protein initially binds near the 5'-end of the 23S rRNA. It is important during the early stages of 50S assembly. It makes multiple contacts with different domains of the 23S rRNA in the assembled 50S subunit and ribosome. Its function is as follows. Forms part of the polypeptide exit tunnel. In Corynebacterium efficiens (strain DSM 44549 / YS-314 / AJ 12310 / JCM 11189 / NBRC 100395), this protein is Large ribosomal subunit protein uL4.